A 315-amino-acid chain; its full sequence is MKPDNQAGVKHKGAAKTARIPIKIVPLDEKLKKPEWIRAKLPNGQRFHEIKQILREQKLHTVCEEATCPNIGECFSKGTATFMIMGDICTRRCPFCDVGHGRPNPLDENEPRHLAESVAAMRLKYVVVTSVDRDDLRDGGAQHFADCINAVREMSPATQIETLVPDFRGRLDIAVDILTQTPPDVMNHNLETVPRLYKQARPGADYAHSLQLLKDYKAKNPNVRTKSGLMVGLGETDEEILEVMRDLRAHNVDMLTIGQYLQPSDGHLPVLRYVHPDVFKMFEEKAYEMGFVHAAVGAMVRSSYHADVQAHEAGV.

Residues Cys-63, Cys-68, Cys-74, Cys-89, Cys-93, Cys-96, and Ser-303 each coordinate [4Fe-4S] cluster. A Radical SAM core domain is found at 75–292 (FSKGTATFMI…EEKAYEMGFV (218 aa)).

It belongs to the radical SAM superfamily. Lipoyl synthase family. The cofactor is [4Fe-4S] cluster.

The protein localises to the cytoplasm. The catalysed reaction is [[Fe-S] cluster scaffold protein carrying a second [4Fe-4S](2+) cluster] + N(6)-octanoyl-L-lysyl-[protein] + 2 oxidized [2Fe-2S]-[ferredoxin] + 2 S-adenosyl-L-methionine + 4 H(+) = [[Fe-S] cluster scaffold protein] + N(6)-[(R)-dihydrolipoyl]-L-lysyl-[protein] + 4 Fe(3+) + 2 hydrogen sulfide + 2 5'-deoxyadenosine + 2 L-methionine + 2 reduced [2Fe-2S]-[ferredoxin]. Its pathway is protein modification; protein lipoylation via endogenous pathway; protein N(6)-(lipoyl)lysine from octanoyl-[acyl-carrier-protein]: step 2/2. Catalyzes the radical-mediated insertion of two sulfur atoms into the C-6 and C-8 positions of the octanoyl moiety bound to the lipoyl domains of lipoate-dependent enzymes, thereby converting the octanoylated domains into lipoylated derivatives. This chain is Lipoyl synthase, found in Chromobacterium violaceum (strain ATCC 12472 / DSM 30191 / JCM 1249 / CCUG 213 / NBRC 12614 / NCIMB 9131 / NCTC 9757 / MK).